A 77-amino-acid polypeptide reads, in one-letter code: Protein OPG195 (77 aa).

Residues Met-1–Met-17 form the signal peptide.

The protein belongs to the chordopoxvirinae B9 protein family.

This Homo sapiens (Human) protein is Protein OPG195 (OPG197).